A 226-amino-acid chain; its full sequence is Octanoyltransferase (226 aa).

Residues Pro31–Pro226 enclose the BPL/LPL catalytic domain. Substrate-binding positions include Arg70 to His77, Ala159 to Gly161, and Gly172 to Ala174. Catalysis depends on Cys190, which acts as the Acyl-thioester intermediate.

This sequence belongs to the LipB family.

Its subcellular location is the cytoplasm. The enzyme catalyses octanoyl-[ACP] + L-lysyl-[protein] = N(6)-octanoyl-L-lysyl-[protein] + holo-[ACP] + H(+). It functions in the pathway protein modification; protein lipoylation via endogenous pathway; protein N(6)-(lipoyl)lysine from octanoyl-[acyl-carrier-protein]: step 1/2. In terms of biological role, catalyzes the transfer of endogenously produced octanoic acid from octanoyl-acyl-carrier-protein onto the lipoyl domains of lipoate-dependent enzymes. Lipoyl-ACP can also act as a substrate although octanoyl-ACP is likely to be the physiological substrate. In Variovorax paradoxus (strain S110), this protein is Octanoyltransferase.